We begin with the raw amino-acid sequence, 496 residues long: Lysosomal Pro-X carboxypeptidase (496 aa).

Positions 1–21 (MGRRALLLLLLSFLAPWATIA) are cleaved as a signal peptide. Residues 22–45 (LRPALRALGSLHLPTNPTSLPAVA) constitute a propeptide that is removed on maturation. N-linked (GlcNAc...) asparagine glycans are attached at residues Asn47 and Asn101. Catalysis depends on Ser179, which acts as the Charge relay system. Residues 194-334 (HMVVGALAAS…QNIFQALNVY (141 aa)) form an SKS domain region. 4 cysteine pairs are disulfide-bonded: Cys215/Cys372, Cys233/Cys310, Cys264/Cys343, and Cys364/Cys394. N-linked (GlcNAc...) asparagine glycosylation is found at Asn317, Asn336, and Asn345. Asn415 carries an N-linked (GlcNAc...) asparagine glycan. Residues Asp430 and His455 each act as charge relay system in the active site.

The protein belongs to the peptidase S28 family. Homodimer. Highest levels in placenta, lung and liver. Also present in heart, brain, pancreas and kidney.

It localises to the lysosome. It catalyses the reaction Cleavage of a -Pro-|-Xaa bond to release a C-terminal amino acid.. Cleaves C-terminal amino acids linked to proline in peptides such as angiotensin II, III and des-Arg9-bradykinin. This cleavage occurs at acidic pH, but enzymatic activity is retained with some substrates at neutral pH. The sequence is that of Lysosomal Pro-X carboxypeptidase (PRCP) from Homo sapiens (Human).